The primary structure comprises 1357 residues: DNA-directed RNA polymerase subunit beta (1357 aa).

Belongs to the RNA polymerase beta chain family. As to quaternary structure, the RNAP catalytic core consists of 2 alpha, 1 beta, 1 beta' and 1 omega subunit. When a sigma factor is associated with the core the holoenzyme is formed, which can initiate transcription.

The catalysed reaction is RNA(n) + a ribonucleoside 5'-triphosphate = RNA(n+1) + diphosphate. DNA-dependent RNA polymerase catalyzes the transcription of DNA into RNA using the four ribonucleoside triphosphates as substrates. The protein is DNA-directed RNA polymerase subunit beta of Neorickettsia sennetsu (Ehrlichia sennetsu).